A 174-amino-acid chain; its full sequence is Neuromedin-U (174 aa).

An N-terminal signal peptide occupies residues 1 to 37 (MSRAAGHRPGLSAGQLAAATASPLLSLLLLLACCADA). Positions 38-105 (CKGVPISPQR…EQSEKDNTKR (68 aa)) are excised as a propeptide. Methionine 141 carries the post-translational modification Methionine sulfoxide; partial. An Asparagine amide modification is found at asparagine 166. The propeptide occupies 170-174 (STSFI).

The protein belongs to the NmU family.

Its subcellular location is the secreted. Its function is as follows. Ligand for receptors NMUR1 and NMUR2. Stimulates muscle contractions of specific regions of the gastrointestinal tract. Does not function as a ligand for either NMUR1 or NMUR2. Indirectly induces prolactin release although its potency is much lower than that of neuromedin precursor-related peptide 36. In terms of biological role, does not function as a ligand for either NMUR1 or NMUR2. Indirectly induces prolactin release from lactotroph cells in the pituitary gland, probably via the hypothalamic dopaminergic system. Functionally, stimulates muscle contractions of specific regions of the gastrointestinal tract. The polypeptide is Neuromedin-U (Nmu) (Mus musculus (Mouse)).